Consider the following 341-residue polypeptide: uncharacterized protein (341 aa).

The segment covering N1–K12 has biased composition (basic residues). 2 disordered regions span residues N1–F21 and K291–D317. Residues S297–A312 show a composition bias toward polar residues.

This is an uncharacterized protein from Lachancea kluyveri (strain ATCC 58438 / CBS 3082 / BCRC 21498 / NBRC 1685 / JCM 7257 / NCYC 543 / NRRL Y-12651) (Yeast).